The sequence spans 185 residues: Threonylcarbamoyl-AMP synthase (185 aa).

The 182-residue stretch at 4–185 (SFRVQQAARE…LATGEVVRPG (182 aa)) folds into the YrdC-like domain.

This sequence belongs to the SUA5 family. TsaC subfamily.

The protein resides in the cytoplasm. The catalysed reaction is L-threonine + hydrogencarbonate + ATP = L-threonylcarbamoyladenylate + diphosphate + H2O. Functionally, required for the formation of a threonylcarbamoyl group on adenosine at position 37 (t(6)A37) in tRNAs that read codons beginning with adenine. Catalyzes the conversion of L-threonine, HCO(3)(-)/CO(2) and ATP to give threonylcarbamoyl-AMP (TC-AMP) as the acyladenylate intermediate, with the release of diphosphate. The sequence is that of Threonylcarbamoyl-AMP synthase from Pseudomonas putida (strain ATCC 700007 / DSM 6899 / JCM 31910 / BCRC 17059 / LMG 24140 / F1).